Here is a 211-residue protein sequence, read N- to C-terminus: Holliday junction branch migration complex subunit RuvA (211 aa).

Residues 1–64 (MIGRLRGMLV…EDAQLLYGFA (64 aa)) form a domain I region. The segment at 65-143 (NKVERKLFRL…DWQAQQIHLV (79 aa)) is domain II. A flexible linker region spans residues 144 to 162 (SDDGVIPEQLSAELSQETT). The segment at 163-211 (FVNDNKGDAINALLSLGYKQVQADKAVKSVYNRGMSSENIIRDALKSMI) is domain III.

The protein belongs to the RuvA family. Homotetramer. Forms an RuvA(8)-RuvB(12)-Holliday junction (HJ) complex. HJ DNA is sandwiched between 2 RuvA tetramers; dsDNA enters through RuvA and exits via RuvB. An RuvB hexamer assembles on each DNA strand where it exits the tetramer. Each RuvB hexamer is contacted by two RuvA subunits (via domain III) on 2 adjacent RuvB subunits; this complex drives branch migration. In the full resolvosome a probable DNA-RuvA(4)-RuvB(12)-RuvC(2) complex forms which resolves the HJ.

It localises to the cytoplasm. Its function is as follows. The RuvA-RuvB-RuvC complex processes Holliday junction (HJ) DNA during genetic recombination and DNA repair, while the RuvA-RuvB complex plays an important role in the rescue of blocked DNA replication forks via replication fork reversal (RFR). RuvA specifically binds to HJ cruciform DNA, conferring on it an open structure. The RuvB hexamer acts as an ATP-dependent pump, pulling dsDNA into and through the RuvAB complex. HJ branch migration allows RuvC to scan DNA until it finds its consensus sequence, where it cleaves and resolves the cruciform DNA. This chain is Holliday junction branch migration complex subunit RuvA, found in Colwellia psychrerythraea (strain 34H / ATCC BAA-681) (Vibrio psychroerythus).